The following is a 335-amino-acid chain: Serine/threonine-protein kinase crk1 (335 aa).

In terms of domain architecture, Protein kinase spans 11 to 292 (YVKERKVGEG…AQQALEHHYF (282 aa)). Residues 17-25 (VGEGTYAVV) and Lys-40 contribute to the ATP site. Asp-133 (proton acceptor) is an active-site residue. Ser-162 carries the phosphoserine modification. Ser-165 carries the phosphoserine; by CAK modification. Phosphoserine is present on Ser-318.

It belongs to the protein kinase superfamily. CMGC Ser/Thr protein kinase family. CDC2/CDKX subfamily. In terms of assembly, one of the nine subunits forming the core-TFIIH basal transcription factor. Interacts with mcs2 and tfb3.

It localises to the cytoplasm. The protein resides in the nucleus. The catalysed reaction is [DNA-directed RNA polymerase] + ATP = phospho-[DNA-directed RNA polymerase] + ADP + H(+). Protein kinase essential for cell proliferation, where it is required for completion of cytokinesis. Phosphorylates the C-terminal repeat domain (CTD) of RNA polymerase II. This Schizosaccharomyces pombe (strain 972 / ATCC 24843) (Fission yeast) protein is Serine/threonine-protein kinase crk1 (crk1).